Reading from the N-terminus, the 529-residue chain is Glutamyl-tRNA reductase (529 aa).

47 to 50 (TCNR) provides a ligand contact to substrate. Residue Cys48 is the Nucleophile of the active site. Residues 56-80 (SPRQQAPAPPRPGSAPPPSDEELSR) are disordered. The segment covering 62–73 (PAPPRPGSAPPP) has biased composition (pro residues). Substrate-binding positions include Ser125, 130-132 (EPQ), and Gln136. Position 205-210 (205-210 (GAGDMA)) interacts with NADP(+). Residues 454-505 (RGAVDGPPTPRSARGAAPPASGARGGGSPRHADPRPQAAEDNGVYARQPGGR) are disordered. Low complexity predominate over residues 464–475 (RSARGAAPPASG).

The protein belongs to the glutamyl-tRNA reductase family. Homodimer.

It catalyses the reaction (S)-4-amino-5-oxopentanoate + tRNA(Glu) + NADP(+) = L-glutamyl-tRNA(Glu) + NADPH + H(+). The protein operates within porphyrin-containing compound metabolism; protoporphyrin-IX biosynthesis; 5-aminolevulinate from L-glutamyl-tRNA(Glu): step 1/2. In terms of biological role, catalyzes the NADPH-dependent reduction of glutamyl-tRNA(Glu) to glutamate 1-semialdehyde (GSA). The polypeptide is Glutamyl-tRNA reductase (Sorangium cellulosum (strain So ce56) (Polyangium cellulosum (strain So ce56))).